The following is a 328-amino-acid chain: MNDNWYKKIIGARTIKTGLATFLTALFCLALNLNPIFAILTAIVTIEPTAKASLKKGYRRLPATIIGALFAVIFTFIFGDQSPFAYALSATFTIILCTKLNLHVGTTVATLTAMAMIPGIHEAYFFNFFSRLLTAIIGLVTAGLVNFIILPPKYYDQVESSINLTESKMYELFELRMRQLLLGKFTKGAPYRQLNQLIDLNQKVETLLSYQKDELSYHKHHDSEWIQLKALTTRAHTNRLFITHLSNLVYLPKDTIITFTNDEKLAILSIAQSINNIYSTGHFERKKQHASLLKMSVKGLDEFDSNQLKSHVIYEILLIYRILDHRFA.

Transmembrane regions (helical) follow at residues 26–46, 61–81, 84–104, and 132–152; these read LFCLALNLNPIFAILTAIVTI, LPATIIGALFAVIFTFIFGDQ, FAYALSATFTIILCTKLNLHV, and LLTAIIGLVTAGLVNFIILPP.

It belongs to the UPF0421 family.

It localises to the cell membrane. In Staphylococcus saprophyticus subsp. saprophyticus (strain ATCC 15305 / DSM 20229 / NCIMB 8711 / NCTC 7292 / S-41), this protein is UPF0421 protein SSP0904.